The following is a 130-amino-acid chain: Small ribosomal subunit protein uS8z/uS8w (130 aa).

It belongs to the universal ribosomal protein uS8 family.

The protein localises to the cytoplasm. The chain is Small ribosomal subunit protein uS8z/uS8w (RPS15AA) from Arabidopsis thaliana (Mouse-ear cress).